The chain runs to 213 residues: Orotate phosphoribosyltransferase (213 aa).

K26 contributes to the 5-phospho-alpha-D-ribose 1-diphosphate binding site. 34 to 35 (FF) contributes to the orotate binding site. 5-phospho-alpha-D-ribose 1-diphosphate contacts are provided by residues 72-73 (YK), R99, K100, K103, H105, and 124-132 (DDVITAGTA). Residues T128 and R156 each coordinate orotate.

Belongs to the purine/pyrimidine phosphoribosyltransferase family. PyrE subfamily. As to quaternary structure, homodimer. Mg(2+) serves as cofactor.

The catalysed reaction is orotidine 5'-phosphate + diphosphate = orotate + 5-phospho-alpha-D-ribose 1-diphosphate. The protein operates within pyrimidine metabolism; UMP biosynthesis via de novo pathway; UMP from orotate: step 1/2. Functionally, catalyzes the transfer of a ribosyl phosphate group from 5-phosphoribose 1-diphosphate to orotate, leading to the formation of orotidine monophosphate (OMP). This is Orotate phosphoribosyltransferase from Salmonella agona (strain SL483).